Reading from the N-terminus, the 660-residue chain is Methionine--tRNA ligase 1 (660 aa).

The short motif at 15-25 (YYPSGKLHIGH) is the 'HIGH' region element. The 'KMSKS' region motif lies at 310-314 (KMSKS). Position 313 (K313) interacts with ATP. The tRNA-binding domain maps to 560 to 660 (DFFKVELRVA…QNLPNGTKIK (101 aa)).

Belongs to the class-I aminoacyl-tRNA synthetase family. MetG type 2B subfamily. Homodimer.

The protein localises to the cytoplasm. The catalysed reaction is tRNA(Met) + L-methionine + ATP = L-methionyl-tRNA(Met) + AMP + diphosphate. Functionally, is required not only for elongation of protein synthesis but also for the initiation of all mRNA translation through initiator tRNA(fMet) aminoacylation. This chain is Methionine--tRNA ligase 1, found in Bacillus cereus (strain ATCC 14579 / DSM 31 / CCUG 7414 / JCM 2152 / NBRC 15305 / NCIMB 9373 / NCTC 2599 / NRRL B-3711).